The sequence spans 657 residues: Putative GreA-associated domains protein (657 aa).

The GRAD2 domain occupies 1-152 (MDTRDLTAYS…EQEGNKEKAT (152 aa)). In terms of domain architecture, GRAD1 spans 153 to 657 (EFYKKALYRF…TAGSFGTLWE (505 aa)).

This is Putative GreA-associated domains protein from Treponema pallidum (strain Nichols).